The sequence spans 918 residues: Pre-pro-metalloprotease PrtV (918 aa).

The signal sequence occupies residues 1–23 (MKTIKKTLLAAAIASFFSSGLYA). The propeptide occupies 24–105 (QTPIDLGVVN…QKGPHKARVF (82 aa)). A Zn(2+)-binding site is contributed by histidine 330. Glutamate 331 is an active-site residue. Histidine 334 is a binding site for Zn(2+). Residues isoleucine 757, aspartate 782, aspartate 821, and aspartate 825 each contribute to the Ca(2+) site. PKD domains lie at 758–835 (APVA…TIKV) and 855–918 (VTMW…KVKL). The propeptide occupies 835-918 (VDTPNALPQA…VTTITIKVKL (84 aa)).

This sequence belongs to the peptidase M6 family. The cofactor is Zn(2+). PrtV is expressed as an inactive, multidomain, 102 kDa pre-pro-metalloprotease. To form a catalytically active protease, PrtV is first secreted, and then it undergoes N- and C-terminal cleavages during envelope translocation to yield a 81 kDa pro-metalloprotease. Outside the cell, the 81 kDa pro-metalloprotease undergoes an auto-cleavage. The two major products of autoproteolysis (37 kDa and 18 kDa) together form the so called 55 kDa active complex.

It is found in the secreted. With respect to regulation, calcium plays an important structural role, providing stability to this protein in the cytoplasm. Outside the cell, the decrease of the calcium concentration triggers the autoproteolysis. PrtV activity is increased by 25 mM of Sr(2+) or Mg(2+) and to some extent by Ba(2+); however, Ba(2+) inhibits PrtV at higher concentrations. Completely inhibited by EDTA and 1,10-phenanthroline. Its function is as follows. Metalloprotease that exhibits a cytotoxic effect leading to cell death. In host tissues, it could play a role in pathogenesis by modulating the stability of the extracellular matrix components such as fibronectin and fibrinogen. Also able to cleave plasminogen. This chain is Pre-pro-metalloprotease PrtV, found in Vibrio cholerae serotype O1 (strain ATCC 39315 / El Tor Inaba N16961).